The primary structure comprises 657 residues: Hemocyanin A chain (657 aa).

C93 and C98 are joined by a disulfide. An N-linked (GlcNAc...) asparagine glycan is attached at N167. Residues H194, H198, H224, H344, H348, and H384 each contribute to the Cu cation site. Disulfide bonds link C483–C502 and C562–C609. The segment at 594-616 (EGHNGGHDYGGTHAQCGVHGEAY) is disordered.

Belongs to the tyrosinase family. Hemocyanin subfamily. In terms of assembly, hexamer of a number of different chains, of which A, B, and C have been identified. As to expression, hemolymph.

The protein localises to the secreted. Its subcellular location is the extracellular space. Functionally, hemocyanins are copper-containing oxygen carriers occurring freely dissolved in the hemolymph of many mollusks and arthropods. This chain is Hemocyanin A chain, found in Panulirus interruptus (California spiny lobster).